The sequence spans 177 residues: Large ribosomal subunit protein uL6 (177 aa).

This sequence belongs to the universal ribosomal protein uL6 family. In terms of assembly, part of the 50S ribosomal subunit.

This protein binds to the 23S rRNA, and is important in its secondary structure. It is located near the subunit interface in the base of the L7/L12 stalk, and near the tRNA binding site of the peptidyltransferase center. The polypeptide is Large ribosomal subunit protein uL6 (Aliivibrio fischeri (strain MJ11) (Vibrio fischeri)).